The sequence spans 61 residues: Small ribosomal subunit protein uS14 (61 aa).

4 residues coordinate Zn(2+): Cys24, Cys27, Cys40, and Cys43.

This sequence belongs to the universal ribosomal protein uS14 family. Zinc-binding uS14 subfamily. Part of the 30S ribosomal subunit. Contacts proteins S3 and S10. Zn(2+) is required as a cofactor.

Functionally, binds 16S rRNA, required for the assembly of 30S particles and may also be responsible for determining the conformation of the 16S rRNA at the A site. The sequence is that of Small ribosomal subunit protein uS14 from Ureaplasma parvum serovar 3 (strain ATCC 27815 / 27 / NCTC 11736).